The chain runs to 704 residues: Acetyl-coenzyme A synthetase 1 (704 aa).

CoA-binding positions include 239–242 and Thr-358; that span reads RGGK. ATP-binding positions include 434 to 436, 458 to 463, Asp-550, and Arg-565; these read GEP and DTYWQT. Ser-573 is a CoA binding site. Arg-576 serves as a coordination point for ATP. Position 641 (Arg-641) interacts with CoA. The Microbody targeting signal signature appears at 702–704; the sequence is VKL.

Belongs to the ATP-dependent AMP-binding enzyme family.

It localises to the microsome. The protein resides in the endoplasmic reticulum. It carries out the reaction acetate + ATP + CoA = acetyl-CoA + AMP + diphosphate. The protein is Acetyl-coenzyme A synthetase 1 (ACS1) of Candida glabrata (strain ATCC 2001 / BCRC 20586 / JCM 3761 / NBRC 0622 / NRRL Y-65 / CBS 138) (Yeast).